The sequence spans 39 residues: KAKQLETLKAAFAATPKPTRHIREQLAQETGLNMRVIQV.

Residues K1–V39 constitute a DNA-binding region (homeobox).

The protein localises to the nucleus. This chain is LIM/homeobox protein xLIM-2B (lim2b), found in Xenopus laevis (African clawed frog).